Consider the following 315-residue polypeptide: Methionyl-tRNA formyltransferase (315 aa).

Ser-113–Pro-116 lines the (6S)-5,6,7,8-tetrahydrofolate pocket.

Belongs to the Fmt family.

The catalysed reaction is L-methionyl-tRNA(fMet) + (6R)-10-formyltetrahydrofolate = N-formyl-L-methionyl-tRNA(fMet) + (6S)-5,6,7,8-tetrahydrofolate + H(+). Its function is as follows. Attaches a formyl group to the free amino group of methionyl-tRNA(fMet). The formyl group appears to play a dual role in the initiator identity of N-formylmethionyl-tRNA by promoting its recognition by IF2 and preventing the misappropriation of this tRNA by the elongation apparatus. This chain is Methionyl-tRNA formyltransferase, found in Edwardsiella ictaluri (strain 93-146).